The following is a 570-amino-acid chain: Periplasmic trehalase (570 aa).

The N-terminal stretch at 1-34 (MIPPEIRRSVLLQKAIKLALAGTLLTFASFSATA) is a signal peptide. Substrate contacts are provided by residues R159, 166–167 (WD), N203, 212–214 (RSQ), 284–286 (RPE), and G317. Active-site proton donor/acceptor residues include D319 and E503. E518 contributes to the substrate binding site. The segment at 544-570 (KPCDSVPSTRPASLSATPTKTPSAATQ) is disordered. Positions 554-570 (PASLSATPTKTPSAATQ) are enriched in low complexity.

Belongs to the glycosyl hydrolase 37 family. In terms of assembly, monomer.

It localises to the periplasm. The enzyme catalyses alpha,alpha-trehalose + H2O = alpha-D-glucose + beta-D-glucose. In terms of biological role, provides the cells with the ability to utilize trehalose at high osmolarity by splitting it into glucose molecules that can subsequently be taken up by the phosphotransferase-mediated uptake system. The chain is Periplasmic trehalase from Salmonella typhimurium (strain LT2 / SGSC1412 / ATCC 700720).